The following is a 249-amino-acid chain: MMGRPEGLKLIDENGKRIDGRKKYELRPIKMEVGVLKNADGSAYVEWGKNKVLAAVYGPREIHPKHLQRPDRAILRVRYNMAPFSVEERKKPGPDRRSVEISKVIRGALEPALLLHMFPRTAIDVFIEILQADAGTRVAGITAASLALADAGIPMKDLVAACAAGKIDGEIVLDLNKEEDNYGEADVPVAIMPLKNDITLLQMDGYLTKDEFLEAVRLAIKGAKAVYQKQREALKEKYLKIAQEVEGNE.

It belongs to the RNase PH family. Rrp41 subfamily. Component of the archaeal exosome complex. Forms a hexameric ring-like arrangement composed of 3 Rrp41-Rrp42 heterodimers. The hexameric ring associates with a trimer of Rrp4 and/or Csl4 subunits.

It is found in the cytoplasm. In terms of biological role, catalytic component of the exosome, which is a complex involved in RNA degradation. Has 3'-&gt;5' exoribonuclease activity. Can also synthesize heteromeric RNA-tails. This Thermococcus kodakarensis (strain ATCC BAA-918 / JCM 12380 / KOD1) (Pyrococcus kodakaraensis (strain KOD1)) protein is Exosome complex component Rrp41.